The sequence spans 878 residues: Protein daughter of sevenless (878 aa).

In terms of domain architecture, PH spans 3-113 (RTFYEGWLIK…WVNCICQVCH (111 aa)). Positions 132 to 176 (ENRTQHTSSSGGLSNSTQNTTTTSLHSSAGTTAPQASVPNAGGSA) are disordered. A compositionally biased stretch (low complexity) spans 136–159 (QHTSSSGGLSNSTQNTTTTSLHSS). The span at 160–169 (AGTTAPQASV) shows a compositional bias: polar residues. Residues 246 to 275 (ALIQAQAAAAAAEQLQQQQQQAARLAVSAN) are a coiled coil. Residues 391–437 (NNNASKQRSDSDSESVFTDDDEWAHPLPLRENVDRSTRPSDSSIENE) are disordered. Serine 399 is modified (phosphoserine). Threonine 481 carries the post-translational modification Phosphothreonine. 2 interaction with DRK regions span residues 638-650 (DCPPVNRKLKPKV) and 690-702 (GPPSVDRKCKPNA). Disordered stretches follow at residues 686–721 (QQPIGPPSVDRKCKPNAYKLGNSATMSPATRRSSGA) and 749–773 (LPRQQHRHHPNSPGSMSVQHQRTAS). 2 stretches are compositionally biased toward polar residues: residues 707–718 (NSATMSPATRRS) and 760–770 (SPGSMSVQHQR). Threonine 771 is modified (phosphothreonine). Residues tyrosine 801 and tyrosine 854 each carry the phosphotyrosine modification.

As to quaternary structure, interacts with DRK. Phosphorylated on Tyr-801 and Tyr-854 in response to sevenless activation, which initiates the recruitment of the phosphatase CSW.

It localises to the cytoplasm. It is found in the membrane. Its function is as follows. Essential component for signaling from various receptor tyrosine kinases such as Sevenless, TORSO and DER. Required for photoreceptor cell and wing development. In Drosophila melanogaster (Fruit fly), this protein is Protein daughter of sevenless (dos).